The following is a 172-amino-acid chain: Large ribosomal subunit protein uL10 (172 aa).

The protein belongs to the universal ribosomal protein uL10 family. Part of the ribosomal stalk of the 50S ribosomal subunit. The N-terminus interacts with L11 and the large rRNA to form the base of the stalk. The C-terminus forms an elongated spine to which L12 dimers bind in a sequential fashion forming a multimeric L10(L12)X complex.

In terms of biological role, forms part of the ribosomal stalk, playing a central role in the interaction of the ribosome with GTP-bound translation factors. The sequence is that of Large ribosomal subunit protein uL10 from Bartonella henselae (strain ATCC 49882 / DSM 28221 / CCUG 30454 / Houston 1) (Rochalimaea henselae).